Reading from the N-terminus, the 158-residue chain is UPF0262 protein Rsph17025_0594 (158 aa).

Belongs to the UPF0262 family.

The sequence is that of UPF0262 protein Rsph17025_0594 from Cereibacter sphaeroides (strain ATCC 17025 / ATH 2.4.3) (Rhodobacter sphaeroides).